We begin with the raw amino-acid sequence, 298 residues long: MEPVIPEGALSQSTKDFLAGVSGGVAQVLVGQPFDCVKVRLQSQSNVSPIYNNALDCVKKISKNEGLAAFYKGTVLPLLGIGFCVSIQFTTFEYCKRFFSRDGTPVTMPQYYVSGAISGLANSFLVGPVEHVRIRLQIQTGKNVLYHGPWDCIKKISSQYGLSGIMKGYNPTAAREAHGLGMYFLAYEALVKNTMAKHHLTDRSQTPGWKLCVFGAGAGYAMWLAAYPFDIVKSKIQTDGFLSKATYKNSWQCAKGIYTKAGLRGFYRGFVPVLVRAAPANAVTFYVYETVSQHIRHL.

3 Solcar repeats span residues threonine 14–phenylalanine 98, valine 106–asparagine 193, and threonine 206–histidine 294. A run of 6 helical transmembrane segments spans residues phenylalanine 17 to valine 37, leucine 67 to isoleucine 87, tyrosine 112 to valine 132, threonine 172 to lysine 192, cysteine 212 to valine 232, and phenylalanine 266 to valine 287.

The protein belongs to the mitochondrial carrier (TC 2.A.29) family.

The protein localises to the mitochondrion inner membrane. Acts as a glutamate and glycine mitochondrial transmembrane transporter. The chain is Glutamate/glycine mitochondrial carrier ymc1 (ymc1) from Schizosaccharomyces pombe (strain 972 / ATCC 24843) (Fission yeast).